The primary structure comprises 176 residues: Large ribosomal subunit protein uL30 (176 aa).

Belongs to the universal ribosomal protein uL30 family. As to quaternary structure, part of the 50S ribosomal subunit.

The protein is Large ribosomal subunit protein uL30 of Pyrobaculum arsenaticum (strain DSM 13514 / JCM 11321 / PZ6).